Reading from the N-terminus, the 331-residue chain is Olfactory receptor 7E178 (331 aa).

The Extracellular portion of the chain corresponds to 1–47 (MMDRYSFIMHQHRDDTVWCPSKIEEQNITRISEFHLMGLSDDLQLQP). N-linked (GlcNAc...) asparagine glycosylation occurs at asparagine 27. A helical membrane pass occupies residues 48 to 68 (ILFGLFLSMYLVTLLGNLLII). Residues 69 to 80 (LTVSSDSHLHSP) are Cytoplasmic-facing. The helical transmembrane segment at 81–100 (MYFFLSNLSLADVSFTSTTL) threads the bilayer. Residues 101–119 (PKMIVDIQTHNRAISYSGC) lie on the Extracellular side of the membrane. A disulfide bridge connects residues cysteine 119 and cysteine 201. A helical membrane pass occupies residues 120 to 140 (LTQMSFFMLFGCLDSLLLTAM). Residues 141-164 (AYDRFVAICHPLHYQFIMNPRLCG) are Cytoplasmic-facing. A helical membrane pass occupies residues 165–185 (LLVFLSVLISLFVSQLHNSVV). The Extracellular portion of the chain corresponds to 186 to 218 (LQLTYFKSVDISHFFCDPSQLLNLACSDTFTNN). Residues 219 to 239 (IVMYFVGAISGFLPISGIFFS) traverse the membrane as a helical segment. Residues 240 to 266 (YYKIVSSILRMPSPGGKYKAFSTCGSH) are Cytoplasmic-facing. Residues 267–287 (LSVVCLFYGTGLGVYLSSAVS) form a helical membrane-spanning segment. The Extracellular portion of the chain corresponds to 288-293 (LSPRKG). Residues 294-314 (AVASIVYTVVTPMLNPFIYSL) traverse the membrane as a helical segment. The Cytoplasmic segment spans residues 315–331 (RNQDIKRAMWRLLRKTV).

This sequence belongs to the G-protein coupled receptor 1 family.

It localises to the cell membrane. Odorant receptor. The polypeptide is Olfactory receptor 7E178 (Mus musculus (Mouse)).